The chain runs to 689 residues: PR domain zinc finger protein 8 (689 aa).

An SET domain is found at 16–131 (KAVQQCLTDI…KDEELLVWYG (116 aa)). Tyr-130 is a binding site for S-adenosyl-L-methionine. Residues 155–183 (YTCLECSQRFQFEFPYVAHLRFRCPKRLH) form a C2H2-type 1 zinc finger. 2 disordered regions span residues 185 to 333 (ADIS…VGGR) and 397 to 506 (SLQE…QPAR). Over residues 193–210 (QGGGVGTKDHGGGGGGGK) the composition is skewed to gly residues. Composition is skewed to low complexity over residues 241 to 258 (PESS…AKPS) and 273 to 286 (GGSS…LSSG). Residues 322-333 (EGGGGAGLVGGR) are compositionally biased toward gly residues. Positions 423 to 433 (STPAAASPVGA) are enriched in low complexity. Residues 472–491 (TSGGGGTGAGAAGGAGGGQG) are compositionally biased toward gly residues. 2 C2H2-type zinc fingers span residues 625–648 (NWCA…RSHH) and 666–688 (LKCP…MTSH).

The protein belongs to the class V-like SAM-binding methyltransferase superfamily. Interacts with EPM2A and NHLRC1. This interaction sequesters EPM2A and NHLRC1 to the nucleus. Interacts with BHLHE22. Expressed in brain, heart, skeletal muscle, testes, prostate.

It localises to the nucleus. Functionally, probable histone methyltransferase, preferentially acting on 'Lys-9' of histone H3. Involved in the control of steroidogenesis through transcriptional repression of steroidogenesis marker genes such as CYP17A1 and LHCGR. Forms with BHLHE22 a transcriptional repressor complex controlling genes involved in neural development and neuronal differentiation. In the retina, it is required for rod bipolar and type 2 OFF-cone bipolar cell survival. This is PR domain zinc finger protein 8 (PRDM8) from Homo sapiens (Human).